The primary structure comprises 102 residues: Urease subunit beta (102 aa).

It belongs to the urease beta subunit family. As to quaternary structure, heterotrimer of UreA (gamma), UreB (beta) and UreC (alpha) subunits. Three heterotrimers associate to form the active enzyme.

Its subcellular location is the cytoplasm. The catalysed reaction is urea + 2 H2O + H(+) = hydrogencarbonate + 2 NH4(+). It participates in nitrogen metabolism; urea degradation; CO(2) and NH(3) from urea (urease route): step 1/1. The sequence is that of Urease subunit beta from Opitutus terrae (strain DSM 11246 / JCM 15787 / PB90-1).